We begin with the raw amino-acid sequence, 158 residues long: MGRFIFATLGLLLVAFSINGAKGCCCPHDWLTLKGFCYKVFNEHKTWNDAEMFCRKYKPGCHLASIHSGEESTDLAEYVSDYLKSGGNVWIGLNDPQKKRSWQWTDRSQNNFYPWKQGEPNNRANNENCVELWSPLGYKNWNDESCASTRAYLCKCRF.

An N-terminal signal peptide occupies residues 1-23; the sequence is MGRFIFATLGLLLVAFSINGAKG. Disulfide bonds link cysteine 26-cysteine 37, cysteine 54-cysteine 154, and cysteine 129-cysteine 146. Positions 33 to 155 constitute a C-type lectin domain; sequence LKGFCYKVFN…CASTRAYLCK (123 aa). Residues 119–121 carry the Mannose-binding motif; sequence EPN. Ca(2+) contacts are provided by glutamate 127, asparagine 142, and aspartate 143.

Belongs to the true venom lectin family. Expressed by the venom gland.

It is found in the secreted. In terms of biological role, mannose-binding lectin which recognizes specific carbohydrate structures and agglutinates a variety of animal cells by binding to cell-surface glycoproteins and glycolipids. May be a calcium-dependent lectin. The chain is C-type lectin lectoxin-Thr1 from Thrasops jacksonii (Jackson's black tree snake).